We begin with the raw amino-acid sequence, 155 residues long: Endoribonuclease YbeY (155 aa).

3 residues coordinate Zn(2+): His114, His118, and His124.

Belongs to the endoribonuclease YbeY family. Zn(2+) is required as a cofactor.

Its subcellular location is the cytoplasm. Its function is as follows. Single strand-specific metallo-endoribonuclease involved in late-stage 70S ribosome quality control and in maturation of the 3' terminus of the 16S rRNA. The polypeptide is Endoribonuclease YbeY (Enterobacter sp. (strain 638)).